The following is a 20-amino-acid chain: Short cationic peptide-4d (20 aa).

At E20 the chain carries Glutamic acid 1-amide.

As to expression, expressed by the venom gland.

It localises to the secreted. In Cupiennius salei (American wandering spider), this protein is Short cationic peptide-4d.